Reading from the N-terminus, the 117-residue chain is Aspartate 1-decarboxylase (117 aa).

Residue Ser25 is the Schiff-base intermediate with substrate; via pyruvic acid of the active site. A Pyruvic acid (Ser) modification is found at Ser25. Thr57 is a binding site for substrate. The active-site Proton donor is the Tyr58. 73 to 75 (GAA) is a substrate binding site.

Belongs to the PanD family. Heterooctamer of four alpha and four beta subunits. Pyruvate serves as cofactor. Is synthesized initially as an inactive proenzyme, which is activated by self-cleavage at a specific serine bond to produce a beta-subunit with a hydroxyl group at its C-terminus and an alpha-subunit with a pyruvoyl group at its N-terminus.

The protein localises to the cytoplasm. It catalyses the reaction L-aspartate + H(+) = beta-alanine + CO2. The protein operates within cofactor biosynthesis; (R)-pantothenate biosynthesis; beta-alanine from L-aspartate: step 1/1. Its function is as follows. Catalyzes the pyruvoyl-dependent decarboxylation of aspartate to produce beta-alanine. This Bacteroides thetaiotaomicron (strain ATCC 29148 / DSM 2079 / JCM 5827 / CCUG 10774 / NCTC 10582 / VPI-5482 / E50) protein is Aspartate 1-decarboxylase.